Reading from the N-terminus, the 285-residue chain is Shikimate dehydrogenase (NADP(+)) (285 aa).

Residues 19–21 (SLS) and Thr66 contribute to the shikimate site. Lys70 acts as the Proton acceptor in catalysis. Shikimate-binding residues include Asn91 and Asp107. Residues 129–133 (GSGGA) and Leu228 contribute to the NADP(+) site. Tyr230 provides a ligand contact to shikimate. Residue Gly251 coordinates NADP(+).

Belongs to the shikimate dehydrogenase family. In terms of assembly, homodimer.

It carries out the reaction shikimate + NADP(+) = 3-dehydroshikimate + NADPH + H(+). Its pathway is metabolic intermediate biosynthesis; chorismate biosynthesis; chorismate from D-erythrose 4-phosphate and phosphoenolpyruvate: step 4/7. Functionally, involved in the biosynthesis of the chorismate, which leads to the biosynthesis of aromatic amino acids. Catalyzes the reversible NADPH linked reduction of 3-dehydroshikimate (DHSA) to yield shikimate (SA). The sequence is that of Shikimate dehydrogenase (NADP(+)) from Prochlorococcus marinus (strain MIT 9515).